The sequence spans 234 residues: 3-dehydroquinate dehydratase (234 aa).

Residues 33 to 35 (EWR) and Arg68 each bind 3-dehydroquinate. Residue His124 is the Proton donor/acceptor of the active site. The active-site Schiff-base intermediate with substrate is Lys151. The 3-dehydroquinate site is built by Arg193, Ser214, and Gln218.

It belongs to the type-I 3-dehydroquinase family. As to quaternary structure, homodimer.

The enzyme catalyses 3-dehydroquinate = 3-dehydroshikimate + H2O. The protein operates within metabolic intermediate biosynthesis; chorismate biosynthesis; chorismate from D-erythrose 4-phosphate and phosphoenolpyruvate: step 3/7. Its function is as follows. Involved in the third step of the chorismate pathway, which leads to the biosynthesis of aromatic amino acids. Catalyzes the cis-dehydration of 3-dehydroquinate (DHQ) and introduces the first double bond of the aromatic ring to yield 3-dehydroshikimate. This chain is 3-dehydroquinate dehydratase, found in Syntrophobacter fumaroxidans (strain DSM 10017 / MPOB).